The primary structure comprises 461 residues: ATP synthase subunit beta (461 aa).

An ATP-binding site is contributed by 151 to 158 (GGAGVGKT).

Belongs to the ATPase alpha/beta chains family. In terms of assembly, F-type ATPases have 2 components, CF(1) - the catalytic core - and CF(0) - the membrane proton channel. CF(1) has five subunits: alpha(3), beta(3), gamma(1), delta(1), epsilon(1). CF(0) has three main subunits: a(1), b(2) and c(9-12). The alpha and beta chains form an alternating ring which encloses part of the gamma chain. CF(1) is attached to CF(0) by a central stalk formed by the gamma and epsilon chains, while a peripheral stalk is formed by the delta and b chains.

Its subcellular location is the cell inner membrane. The enzyme catalyses ATP + H2O + 4 H(+)(in) = ADP + phosphate + 5 H(+)(out). Produces ATP from ADP in the presence of a proton gradient across the membrane. The catalytic sites are hosted primarily by the beta subunits. In Coxiella burnetii (strain Dugway 5J108-111), this protein is ATP synthase subunit beta.